Here is a 163-residue protein sequence, read N- to C-terminus: Olfactory marker protein (163 aa).

An N-acetylalanine modification is found at A2.

The protein belongs to the olfactory marker protein family. As to quaternary structure, interacts with BEX1 and BEX2. Uniquely associated with mature olfactory receptor neurons.

The protein resides in the cytoplasm. Its function is as follows. May act as a modulator of the olfactory signal-transduction cascade. The chain is Olfactory marker protein (Omp) from Rattus norvegicus (Rat).